Consider the following 620-residue polypeptide: tRNA uridine 5-carboxymethylaminomethyl modification enzyme MnmG (620 aa).

FAD contacts are provided by residues 13–18 (GGGHAG), valine 125, and serine 182. An NAD(+)-binding site is contributed by 280-294 (GPRYCPSVEDKIVKF). Asparagine 377 provides a ligand contact to FAD.

This sequence belongs to the MnmG family. In terms of assembly, homodimer. Heterotetramer of two MnmE and two MnmG subunits. FAD is required as a cofactor.

Its subcellular location is the cytoplasm. In terms of biological role, NAD-binding protein involved in the addition of a carboxymethylaminomethyl (cmnm) group at the wobble position (U34) of certain tRNAs, forming tRNA-cmnm(5)s(2)U34. The protein is tRNA uridine 5-carboxymethylaminomethyl modification enzyme MnmG of Sulfurihydrogenibium sp. (strain YO3AOP1).